Reading from the N-terminus, the 71-residue chain is Small ribosomal subunit protein bS18 (71 aa).

This sequence belongs to the bacterial ribosomal protein bS18 family. As to quaternary structure, part of the 30S ribosomal subunit. Forms a tight heterodimer with protein bS6.

Binds as a heterodimer with protein bS6 to the central domain of the 16S rRNA, where it helps stabilize the platform of the 30S subunit. In Microcystis aeruginosa (strain NIES-843 / IAM M-2473), this protein is Small ribosomal subunit protein bS18.